The sequence spans 94 residues: MTTINVEVRNDQGKGASRRLRAANKFPAIVYGGSEAAISIALDHDTTKNLELKPGFYDSVLTLVIDGKETKVKVQAVQRHAFKPKLTHIDFVRV.

The protein belongs to the bacterial ribosomal protein bL25 family. As to quaternary structure, part of the 50S ribosomal subunit; part of the 5S rRNA/L5/L18/L25 subcomplex. Contacts the 5S rRNA. Binds to the 5S rRNA independently of L5 and L18.

In terms of biological role, this is one of the proteins that binds to the 5S RNA in the ribosome where it forms part of the central protuberance. The chain is Large ribosomal subunit protein bL25 from Yersinia pestis bv. Antiqua (strain Antiqua).